The chain runs to 51 residues: Large ribosomal subunit protein eL39 (51 aa).

The interval 32-51 is disordered; that stretch reads KRRVTRSPTRRHWRRVKLKA.

This sequence belongs to the eukaryotic ribosomal protein eL39 family.

This is Large ribosomal subunit protein eL39 from Pyrobaculum arsenaticum (strain DSM 13514 / JCM 11321 / PZ6).